We begin with the raw amino-acid sequence, 82 residues long: Envelope small membrane protein (82 aa).

Topologically, residues 1–16 are virion surface; it reads MLPFVHEQIGTIIVNF. Residues 17 to 37 form a helical membrane-spanning segment; the sequence is FILTVVCAITLVVCLAILTAI. The Intravirion segment spans residues 38–78; the sequence is RLCVQCASGVNTLLFVPAFYIYNTGRNAYFKFQENRPPFPP.

Belongs to the betacoronaviruses E protein family. As to quaternary structure, homopentamer. Interacts with membrane protein M in the budding compartment of the host cell, which is located between endoplasmic reticulum and the Golgi complex. Interacts with Nucleoprotein.

It localises to the host Golgi apparatus membrane. In terms of biological role, plays a central role in virus morphogenesis and assembly. Acts as a viroporin and self-assembles in host membranes forming pentameric protein-lipid pores that allow ion transport. Also plays a role in the induction of apoptosis. The sequence is that of Envelope small membrane protein from Tylonycteris pachypus (Lesser bamboo bat).